Consider the following 349-residue polypeptide: Ribonucleoside-diphosphate reductase small chain (349 aa).

Aspartate 99, glutamate 130, and histidine 133 together coordinate Fe cation. Tyrosine 137 is a catalytic residue. Fe cation-binding residues include glutamate 192, glutamate 226, and histidine 229.

It belongs to the ribonucleoside diphosphate reductase small chain family. As to quaternary structure, heterodimer of a large and a small subunit. It depends on Fe cation as a cofactor.

It catalyses the reaction a 2'-deoxyribonucleoside 5'-diphosphate + [thioredoxin]-disulfide + H2O = a ribonucleoside 5'-diphosphate + [thioredoxin]-dithiol. In terms of biological role, provides the precursors necessary for DNA synthesis. Catalyzes the biosynthesis of deoxyribonucleotides from the corresponding ribonucleotides. This is Ribonucleoside-diphosphate reductase small chain (RNR2) from Plasmodium falciparum (isolate Dd2).